The following is a 190-amino-acid chain: CASP-like protein 1E2 (190 aa).

The segment covering 1-12 has biased composition (low complexity); sequence MENEGKNNMNGM. Positions 1 to 24 are disordered; it reads MENEGKNNMNGMEMEKGKRESRSR. The Cytoplasmic portion of the chain corresponds to 1-28; sequence MENEGKNNMNGMEMEKGKRESRSRKGVE. A compositionally biased stretch (basic and acidic residues) spans 13–24; it reads EMEKGKRESRSR. The chain crosses the membrane as a helical span at residues 29-49; that stretch reads LTMRVLALVLTMAAATVLGVA. Over 50–83 the chain is Extracellular; that stretch reads KQTKVVSIKLIPALPPLDITTTAKASYLSAFVYN. Residues 84-104 traverse the membrane as a helical segment; that stretch reads ISANAIACGYTAISIAILMIS. Residues 105-111 are Cytoplasmic-facing; it reads RGRRSKK. A helical membrane pass occupies residues 112–132; that stretch reads LLMAVLLGDLVMVALLFSGTG. Over 133–163 the chain is Extracellular; that stretch reads AASAIGLMGLQGNKHVMWNKVCGVFGKFCHR. The helical transmembrane segment at 164–184 threads the bilayer; sequence AAPSLPLTFLAAVVFMFLVVL. Over 185–190 the chain is Cytoplasmic; that stretch reads DAIKLP.

It belongs to the Casparian strip membrane proteins (CASP) family. In terms of assembly, homodimer and heterodimers.

Its subcellular location is the cell membrane. The polypeptide is CASP-like protein 1E2 (Arabidopsis lyrata subsp. lyrata (Lyre-leaved rock-cress)).